Reading from the N-terminus, the 315-residue chain is Olfactory receptor 4A5 (315 aa).

At 1-23 the chain is on the extracellular side; that stretch reads MRQNNNITEFVLLGFSQDPGVQK. Asparagine 6 carries an N-linked (GlcNAc...) asparagine glycan. A helical transmembrane segment spans residues 24–47; sequence ALFVMFLLTYLVTVVGNLLIVVDI. Topologically, residues 48–55 are cytoplasmic; sequence IASPSLGS. A helical membrane pass occupies residues 56-77; sequence PMYFFLACLSFIDAAYSTTISP. The Extracellular segment spans residues 78–98; sequence KLIVGLFCDKKTISFQGCMGQ. The cysteines at positions 95 and 186 are disulfide-linked. Residues 99 to 118 form a helical membrane-spanning segment; the sequence is LFIDHFFGGAEVFLLVVMAC. Topologically, residues 119-137 are cytoplasmic; sequence DRYVAICKPLHYLTIMNRQ. The helical transmembrane segment at 138 to 156 threads the bilayer; sequence VCFLLLVVAMIGGFVHSAF. The Extracellular portion of the chain corresponds to 157 to 192; sequence QIVVYSLPFCGPNVIVHFSCDMHPLLELACTDTYFI. The helical transmembrane segment at 193–216 threads the bilayer; it reads GLTVVVNSGAICMVIFNLLLISYG. The Cytoplasmic portion of the chain corresponds to 217 to 232; that stretch reads VILSSLKTYSQEKRGK. A helical membrane pass occupies residues 233–255; it reads ALSTCSSGSTVVVLFFVPCIFIY. Topologically, residues 256 to 266 are extracellular; that stretch reads VRPVSNFPTDK. The helical transmembrane segment at 267 to 286 threads the bilayer; sequence FMTVFYTIITHMLSPLIYTL. Residues 287–315 lie on the Cytoplasmic side of the membrane; sequence RNSEMRNAIEKLLGKKLTIFIIGGVSVLM.

This sequence belongs to the G-protein coupled receptor 1 family.

The protein resides in the cell membrane. Odorant receptor. The polypeptide is Olfactory receptor 4A5 (OR4A5) (Homo sapiens (Human)).